Here is a 228-residue protein sequence, read N- to C-terminus: Ribose-5-phosphate isomerase A (228 aa).

Residues T29–T32, D85–D88, and K98–G101 each bind substrate. The active-site Proton acceptor is the E107. Substrate is bound at residue K125.

This sequence belongs to the ribose 5-phosphate isomerase family. As to quaternary structure, homodimer.

It catalyses the reaction aldehydo-D-ribose 5-phosphate = D-ribulose 5-phosphate. Its pathway is carbohydrate degradation; pentose phosphate pathway; D-ribose 5-phosphate from D-ribulose 5-phosphate (non-oxidative stage): step 1/1. In terms of biological role, catalyzes the reversible conversion of ribose-5-phosphate to ribulose 5-phosphate. This chain is Ribose-5-phosphate isomerase A, found in Staphylococcus aureus (strain MRSA252).